The following is a 476-amino-acid chain: Aspartyl/glutamyl-tRNA(Asn/Gln) amidotransferase subunit B (476 aa).

It belongs to the GatB/GatE family. GatB subfamily. As to quaternary structure, heterotrimer of A, B and C subunits.

It catalyses the reaction L-glutamyl-tRNA(Gln) + L-glutamine + ATP + H2O = L-glutaminyl-tRNA(Gln) + L-glutamate + ADP + phosphate + H(+). It carries out the reaction L-aspartyl-tRNA(Asn) + L-glutamine + ATP + H2O = L-asparaginyl-tRNA(Asn) + L-glutamate + ADP + phosphate + 2 H(+). In terms of biological role, allows the formation of correctly charged Asn-tRNA(Asn) or Gln-tRNA(Gln) through the transamidation of misacylated Asp-tRNA(Asn) or Glu-tRNA(Gln) in organisms which lack either or both of asparaginyl-tRNA or glutaminyl-tRNA synthetases. The reaction takes place in the presence of glutamine and ATP through an activated phospho-Asp-tRNA(Asn) or phospho-Glu-tRNA(Gln). This is Aspartyl/glutamyl-tRNA(Asn/Gln) amidotransferase subunit B from Lacticaseibacillus paracasei (strain ATCC 334 / BCRC 17002 / CCUG 31169 / CIP 107868 / KCTC 3260 / NRRL B-441) (Lactobacillus paracasei).